A 131-amino-acid chain; its full sequence is Histone H2A.1 (131 aa).

Residue S2 is modified to N-acetylserine. N6-acetyllysine occurs at positions 5 and 8. Q106 bears the N5-methylglutamine mark. S128 is modified (phosphoserine). The short motif at 128 to 129 (SQ) is the [ST]-Q motif element.

This sequence belongs to the histone H2A family. As to quaternary structure, the nucleosome is a histone octamer containing two molecules each of H2A, H2B, H3 and H4 assembled in one H3-H4 heterotetramer and two H2A-H2B heterodimers. The octamer wraps approximately 147 bp of DNA. Post-translationally, phosphorylated to form H2AS128ph (gamma-H2A) in response to DNA double-strand breaks (DSBs) generated by exogenous genotoxic agents and by stalled replication forks. Phosphorylation is dependent on the DNA damage checkpoint kinases MEC1/ATR and TEL1/ATM, spreads on either side of a detected DSB site and may mark the surrounding chromatin for recruitment of proteins required for DNA damage signaling and repair. Gamma-H2A is removed from the DNA prior to the strand invasion-primer extension step of the repair process and subsequently dephosphorylated by PPH3, a component of the histone H2A phosphatase complex (HTP-C). Dephosphorylation is necessary for efficient recovery from the DNA damage checkpoint. In terms of processing, acetylated by ESA1 to form H2AK4ac and H2AK7ac.

The protein localises to the nucleus. Its subcellular location is the chromosome. In terms of biological role, core component of nucleosome which plays a central role in DNA double strand break (DSB) repair. Nucleosomes wrap and compact DNA into chromatin, limiting DNA accessibility to the cellular machineries which require DNA as a template. Histones thereby play a central role in transcription regulation, DNA repair, DNA replication and chromosomal stability. DNA accessibility is regulated via a complex set of post-translational modifications of histones, also called histone code, and nucleosome remodeling. The protein is Histone H2A.1 (HTA1) of Candida glabrata (strain ATCC 2001 / BCRC 20586 / JCM 3761 / NBRC 0622 / NRRL Y-65 / CBS 138) (Yeast).